Here is a 512-residue protein sequence, read N- to C-terminus: Ribose import ATP-binding protein RbsA 2 (512 aa).

ABC transporter domains are found at residues 7-242 (LEIR…VGRE) and 257-498 (LGEP…SGIG). 39 to 46 (GENGAGKS) provides a ligand contact to ATP.

Belongs to the ABC transporter superfamily. Ribose importer (TC 3.A.1.2.1) family. In terms of assembly, the complex is composed of an ATP-binding protein (RbsA), two transmembrane proteins (RbsC) and a solute-binding protein (RbsB).

It is found in the cell inner membrane. It catalyses the reaction D-ribose(out) + ATP + H2O = D-ribose(in) + ADP + phosphate + H(+). Part of the ABC transporter complex RbsABC involved in ribose import. Responsible for energy coupling to the transport system. The polypeptide is Ribose import ATP-binding protein RbsA 2 (Rhizobium meliloti (strain 1021) (Ensifer meliloti)).